The sequence spans 363 residues: Probable tRNA pseudouridine synthase D (363 aa).

The Nucleophile role is filled by aspartate 82. The 213-residue stretch at 151 to 363 (YLPAYIGYQR…IARTDPRLFT (213 aa)) folds into the TRUD domain.

This sequence belongs to the pseudouridine synthase TruD family.

The enzyme catalyses uridine(13) in tRNA = pseudouridine(13) in tRNA. Its function is as follows. Could be responsible for synthesis of pseudouridine from uracil-13 in transfer RNAs. The polypeptide is Probable tRNA pseudouridine synthase D (Sulfurisphaera tokodaii (strain DSM 16993 / JCM 10545 / NBRC 100140 / 7) (Sulfolobus tokodaii)).